The chain runs to 404 residues: Cysteine desulfurase IscS (404 aa).

Pyridoxal 5'-phosphate is bound by residues 75 to 76 (AT), N155, Q183, and 203 to 205 (SGH). K206 bears the N6-(pyridoxal phosphate)lysine mark. A pyridoxal 5'-phosphate-binding site is contributed by T243. C328 serves as the catalytic Cysteine persulfide intermediate. [2Fe-2S] cluster is bound at residue C328.

It belongs to the class-V pyridoxal-phosphate-dependent aminotransferase family. NifS/IscS subfamily. Homodimer. Forms a heterotetramer with IscU, interacts with other sulfur acceptors. Requires pyridoxal 5'-phosphate as cofactor.

The protein resides in the cytoplasm. The catalysed reaction is (sulfur carrier)-H + L-cysteine = (sulfur carrier)-SH + L-alanine. It participates in cofactor biosynthesis; iron-sulfur cluster biosynthesis. Functionally, master enzyme that delivers sulfur to a number of partners involved in Fe-S cluster assembly, tRNA modification or cofactor biosynthesis. Catalyzes the removal of elemental sulfur and selenium atoms from cysteine and selenocysteine to produce alanine. Functions as a sulfur delivery protein for Fe-S cluster synthesis onto IscU, an Fe-S scaffold assembly protein, as well as other S acceptor proteins. Also functions as a selenium delivery protein in the pathway for the biosynthesis of selenophosphate. The chain is Cysteine desulfurase IscS from Salmonella gallinarum (strain 287/91 / NCTC 13346).